Consider the following 278-residue polypeptide: Trans-2,3-dihydro-3-hydroxyanthranilate isomerase (278 aa).

Glu45 is an active-site residue.

It belongs to the PhzF family.

The catalysed reaction is (5S,6S)-6-amino-5-hydroxycyclohexa-1,3-diene-1-carboxyate = (1R,6S)-6-amino-5-oxocyclohex-2-ene-1-carboxylate. It functions in the pathway secondary metabolite biosynthesis; pyocyanine biosynthesis. Isomerase that catalyzes the condensation of two molecules of trans-2,3-dihydro-3-hydroxyanthranilic acid (DHHA) into the phenazine ring system. The final product is not yet known. This chain is Trans-2,3-dihydro-3-hydroxyanthranilate isomerase (phzF1), found in Pseudomonas aeruginosa (strain ATCC 15692 / DSM 22644 / CIP 104116 / JCM 14847 / LMG 12228 / 1C / PRS 101 / PAO1).